The following is a 334-amino-acid chain: MKGKLINSFLMKKPKISVIGAGKVGENVAYLLTILGLGDVYLFARYKKGLEPAKAKALDLKQMAVLMDIDINVKGISYDKEGFEELKGSDIVVITAGIPRREGMSREDLLYENLKILKKFTDAIKEYAKDSIIIVVSNPVDTLTYATIKLTGFEPRRVIGMAGVLDSARFKNFVKEKIGISNADIRTLVLGTHGDLMVPVTSHSFIGDKPIEEVFSASEIDELIEKTRKGGAQIVSLMGTSAYYAPAASVVIMVESIINDRKRVMPCSVYVEGEAAKHYEIEGVCIGLPVVLGKKGVEDFELVNLSGYEKRELLRSAKTLKEMVSLADKLLNEL.

19–25 (IGAGKVG) serves as a coordination point for NAD(+). Residues R100 and R106 each contribute to the substrate site. NAD(+) is bound by residues N113 and 136 to 138 (VSN). Substrate contacts are provided by N138 and R169. Residue H193 is the Proton acceptor of the active site.

It belongs to the LDH/MDH superfamily.

The catalysed reaction is (S)-malate + NAD(+) = oxaloacetate + NADH + H(+). Catalyzes the reversible oxidation of malate to oxaloacetate. The polypeptide is Malate dehydrogenase 2 (Aquifex aeolicus (strain VF5)).